Consider the following 85-residue polypeptide: Large ribosomal subunit protein bL27 (85 aa).

The tract at residues 1–22 (MAHKKAGGSTRNGRDSESKRLG) is disordered.

The protein belongs to the bacterial ribosomal protein bL27 family.

This is Large ribosomal subunit protein bL27 from Aliivibrio salmonicida (strain LFI1238) (Vibrio salmonicida (strain LFI1238)).